We begin with the raw amino-acid sequence, 721 residues long: Xylosyl- and glucuronyltransferase LARGE2 (721 aa).

The Cytoplasmic portion of the chain corresponds to 1–8 (MLPRGRPR). The chain crosses the membrane as a helical; Signal-anchor for type II membrane protein span at residues 9–29 (ALGAAALLLLLLLLGFLLFGG). Over 30–721 (DLGCERREPG…LQQPQSPARG (692 aa)) the chain is Lumenal. Residues 59–89 (DGRLRRAAALDGDPGAGPGDHNRSDCGPQPP) form a disordered region. 2 N-linked (GlcNAc...) asparagine glycosylation sites follow: Asn80 and Asn107. Residues 97-372 (LHVAIVCAGH…FLEYDGNLLR (276 aa)) are xylosyltransferase activity. Residues Asp201 and Asp203 each contribute to the Mn(2+) site. Residue Asn231 is glycosylated (N-linked (GlcNAc...) asparagine). Positions 373 to 715 (RELFVCPSQP…LKYLPALQQP (343 aa)) are glucuronyltransferase activity. Mn(2+) contacts are provided by Asp521 and Asp523.

This sequence in the C-terminal section; belongs to the glycosyltransferase 49 family. It in the N-terminal section; belongs to the glycosyltransferase 8 family. Interacts with B4GAT1. It depends on Mn(2+) as a cofactor. As to expression, widely expressed. Expressed at high level in placenta, pancreas and kidney compared to LARGE. Not expressed in brain.

It is found in the golgi apparatus membrane. It catalyses the reaction 3-O-[beta-D-GlcA-(1-&gt;3)-beta-D-Xyl-(1-&gt;4)-Rib-ol-P-Rib-ol-P-3-beta-D-GalNAc-(1-&gt;3)-beta-D-GlcNAc-(1-&gt;4)-(O-6-P-alpha-D-Man)]-Thr-[protein] + UDP-alpha-D-xylose = 3-O-[alpha-D-Xyl-(1-&gt;3)-beta-D-GlcA-(1-&gt;4)-beta-D-Xyl-(1-&gt;4)-Rib-ol-P-Rib-ol-P-3-beta-D-GalNAc-(1-&gt;3)-beta-D-GlcNAc-(1-&gt;4)-(O-6-P-alpha-D-Man)]-Thr-[protein] + UDP + H(+). The catalysed reaction is 3-O-{(1-&gt;[3)-alpha-D-Xyl-(1-&gt;3)-beta-D-GlcA-(1-&gt;](n)-4)-beta-D-Xyl-(1-&gt;4)-Rib-ol-P-Rib-ol-P-3-beta-D-GalNAc-(1-&gt;3)-beta-D-GlcNAc-(1-&gt;4)-O-6-P-alpha-D-Man}-L-Thr-[protein] + UDP-alpha-D-glucuronate = 3-O-{beta-D-GlcA-(1-&gt;[3)-alpha-D-Xyl-(1-&gt;3)-beta-D-GlcA-(1-&gt;](n)-4)-beta-D-Xyl-(1-&gt;4)-Rib-ol-P-Rib-ol-P-3-beta-D-GalNAc-(1-&gt;3)-beta-D-GlcNAc-(1-&gt;4)-O-6-P-alpha-D-Man}-L-Thr-[protein] + UDP + H(+). It carries out the reaction 3-O-{beta-D-GlcA-(1-&gt;[3)-alpha-D-Xyl-(1-&gt;3)-beta-D-GlcA-(1-&gt;](n)-4)-beta-D-Xyl-(1-&gt;4)-Rib-ol-P-Rib-ol-P-3-beta-D-GalNAc-(1-&gt;3)-beta-D-GlcNAc-(1-&gt;4)-O-6-P-alpha-D-Man}-L-Thr-[protein] + UDP-alpha-D-xylose = 3-O-{(1-&gt;[3)-alpha-D-Xyl-(1-&gt;3)-beta-D-GlcA-(1-&gt;](n+1)-4)-beta-D-Xyl-(1-&gt;4)-Rib-ol-P-Rib-ol-P-3-beta-D-GalNAc-(1-&gt;3)-beta-D-GlcNAc-(1-&gt;4)-O-6-P-alpha-D-Man}-L-Thr-[protein] + UDP + H(+). The protein operates within protein modification; protein glycosylation. Its function is as follows. Bifunctional glycosyltransferase with both alpha-1,3-xylosyltransferase and beta-1,3-glucuronyltransferase activities involved in the maturation of alpha-dystroglycan (DAG1) by glycosylation leading to DAG1 binding to laminin G-like domain-containing extracellular proteins with high affinity and in a phosphorylated-O-mannosyl trisaccharide dependent manner. Elongates the glucuronyl-beta-1,4-xylose-beta disaccharide primer structure by adding repeating units [-3-Xylose-alpha-1,3-GlcA-beta-1-] to produce a heteropolysaccharide. Supports the maturation of DAG1 more effectively than LARGE1. In addition, can modify both heparan sulfate (HS)- and chondroitin/dermatan sulfate (CS/DS)-proteoglycans (PGs), namely GPC4, with a glycosaminoglycan (GAG)-like polysaccharide composed of xylose and glucuronic acid to confer laminin binding. The sequence is that of Xylosyl- and glucuronyltransferase LARGE2 from Homo sapiens (Human).